The following is a 120-amino-acid chain: Large ribosomal subunit protein bL12 (120 aa).

Belongs to the bacterial ribosomal protein bL12 family. As to quaternary structure, homodimer. Part of the ribosomal stalk of the 50S ribosomal subunit. Forms a multimeric L10(L12)X complex, where L10 forms an elongated spine to which 2 to 4 L12 dimers bind in a sequential fashion. Binds GTP-bound translation factors.

Its function is as follows. Forms part of the ribosomal stalk which helps the ribosome interact with GTP-bound translation factors. Is thus essential for accurate translation. The chain is Large ribosomal subunit protein bL12 from Alkaliphilus metalliredigens (strain QYMF).